A 337-amino-acid polypeptide reads, in one-letter code: Draxin (337 aa).

The first 24 residues, Met-1–Ala-24, serve as a signal peptide directing secretion. Disordered regions lie at residues Gly-36–Asp-67, Arg-107–Lys-133, and Trp-234–Pro-261. Basic residues-rich tracts occupy residues Val-122–Lys-133 and Thr-237–Lys-246. An N-linked (GlcNAc...) asparagine glycan is attached at Asn-252.

This sequence belongs to the draxin family. As to quaternary structure, interacts with LRP6.

Its subcellular location is the secreted. Functionally, chemorepulsive axon guidance protein required for the development of spinal cord and forebrain commissures. Acts as a chemorepulsive guidance protein for commissural axons during development. Able to inhibit or repel neurite outgrowth from dorsal spinal cord. Inhibits the stabilization of cytosolic beta-catenin (CTNNB1) via its interaction with LRP6, thereby acting as an antagonist of Wnt signaling pathway. The protein is Draxin of Bos taurus (Bovine).